A 1013-amino-acid chain; its full sequence is Alpha-2-macroglobulin homolog (1013 aa).

The disordered stretch occupies residues 804 to 844 (AQRGANGERDGLRETVPVRPAGARQLLSGSGSVGADKAGGN).

This sequence belongs to the protease inhibitor I39 (alpha-2-macroglobulin) family. Bacterial alpha-2-macroglobulin subfamily.

The polypeptide is Alpha-2-macroglobulin homolog (Deinococcus radiodurans (strain ATCC 13939 / DSM 20539 / JCM 16871 / CCUG 27074 / LMG 4051 / NBRC 15346 / NCIMB 9279 / VKM B-1422 / R1)).